The primary structure comprises 21 residues: 5-methyltetrahydropteroyltriglutamate--homocysteine methyltransferase (21 aa).

Belongs to the vitamin-B12 independent methionine synthase family. Requires Zn(2+) as cofactor.

The protein localises to the cytoplasm. The catalysed reaction is 5-methyltetrahydropteroyltri-L-glutamate + L-homocysteine = tetrahydropteroyltri-L-glutamate + L-methionine. The protein operates within amino-acid biosynthesis; L-methionine biosynthesis via de novo pathway; L-methionine from L-homocysteine (MetE route): step 1/1. Catalyzes the transfer of a methyl group from 5-methyltetrahydrofolate to homocysteine resulting in methionine formation. The sequence is that of 5-methyltetrahydropteroyltriglutamate--homocysteine methyltransferase from Populus euphratica (Euphrates poplar).